The primary structure comprises 124 residues: MISETIRSGDWKGEKHVPVIEYEREGELVKVKVQVGKEIPHPNTTEHHIRYIELYFLPEGENFVYQVGRVEFTAHGESVNGPNTSDVYTEPIAYFVLKTKKKGKLYALSYCNIHGLWENEVTLE.

The Fe cation site is built by E14, H16, H41, H47, C111, and H114.

It belongs to the desulfoferrodoxin family. As to quaternary structure, homotetramer. Fe cation is required as a cofactor.

It carries out the reaction reduced [rubredoxin] + superoxide + 2 H(+) = oxidized [rubredoxin] + H2O2. Its function is as follows. Uses electrons from reduced NADP, by way of rubredoxin and an oxidoreductase, to catalyze the reduction of superoxide to hydrogen peroxide. The chain is Superoxide reductase (sorA) from Pyrococcus furiosus (strain ATCC 43587 / DSM 3638 / JCM 8422 / Vc1).